Consider the following 494-residue polypeptide: Probable cytosol aminopeptidase (494 aa).

Residues K260 and D265 each coordinate Mn(2+). K272 is an active-site residue. The Mn(2+) site is built by D283, D342, and E344. R346 is an active-site residue.

Belongs to the peptidase M17 family. It depends on Mn(2+) as a cofactor.

It is found in the cytoplasm. It catalyses the reaction Release of an N-terminal amino acid, Xaa-|-Yaa-, in which Xaa is preferably Leu, but may be other amino acids including Pro although not Arg or Lys, and Yaa may be Pro. Amino acid amides and methyl esters are also readily hydrolyzed, but rates on arylamides are exceedingly low.. The enzyme catalyses Release of an N-terminal amino acid, preferentially leucine, but not glutamic or aspartic acids.. Presumably involved in the processing and regular turnover of intracellular proteins. Catalyzes the removal of unsubstituted N-terminal amino acids from various peptides. The chain is Probable cytosol aminopeptidase from Bacillus anthracis (strain CDC 684 / NRRL 3495).